The chain runs to 233 residues: Adenosine 5'-phosphosulfate reductase (233 aa).

4 residues coordinate [4Fe-4S] cluster: cysteine 120, cysteine 121, cysteine 203, and cysteine 206. Catalysis depends on cysteine 229, which acts as the Nucleophile; cysteine thiosulfonate intermediate.

Belongs to the PAPS reductase family. CysH subfamily. Requires [4Fe-4S] cluster as cofactor.

The protein resides in the cytoplasm. It catalyses the reaction [thioredoxin]-disulfide + sulfite + AMP + 2 H(+) = adenosine 5'-phosphosulfate + [thioredoxin]-dithiol. It participates in sulfur metabolism; hydrogen sulfide biosynthesis; sulfite from sulfate. Its function is as follows. Catalyzes the formation of sulfite from adenosine 5'-phosphosulfate (APS) using thioredoxin as an electron donor. The sequence is that of Adenosine 5'-phosphosulfate reductase from Bacillus velezensis (strain DSM 23117 / BGSC 10A6 / LMG 26770 / FZB42) (Bacillus amyloliquefaciens subsp. plantarum).